Consider the following 673-residue polypeptide: DNA ligase (673 aa).

NAD(+) contacts are provided by residues 32–36 (DAEYD), 81–82 (SL), and Glu113. The active-site N6-AMP-lysine intermediate is Lys115. Residues Arg136, Glu173, Lys290, and Lys314 each contribute to the NAD(+) site. Positions 408, 411, 426, and 432 each coordinate Zn(2+). In terms of domain architecture, BRCT spans 595–673 (EIDSPFAGKT…EAEMIRLLGA (79 aa)).

It belongs to the NAD-dependent DNA ligase family. LigA subfamily. Requires Mg(2+) as cofactor. Mn(2+) serves as cofactor.

It carries out the reaction NAD(+) + (deoxyribonucleotide)n-3'-hydroxyl + 5'-phospho-(deoxyribonucleotide)m = (deoxyribonucleotide)n+m + AMP + beta-nicotinamide D-nucleotide.. Its function is as follows. DNA ligase that catalyzes the formation of phosphodiester linkages between 5'-phosphoryl and 3'-hydroxyl groups in double-stranded DNA using NAD as a coenzyme and as the energy source for the reaction. It is essential for DNA replication and repair of damaged DNA. This is DNA ligase from Serratia proteamaculans (strain 568).